Consider the following 237-residue polypeptide: Concanavalin V (237 aa).

Mn(2+) is bound by residues glutamate 8 and aspartate 10. Residues aspartate 10, tyrosine 12, asparagine 14, and aspartate 19 each coordinate Ca(2+). Position 14 (asparagine 14) interacts with a carbohydrate. 2 residues coordinate Mn(2+): aspartate 19 and histidine 24. Residues glycine 70, 98-100 (GLY), aspartate 208, and arginine 228 contribute to the a carbohydrate site.

This sequence belongs to the leguminous lectin family. Homotetramer. Post-translationally, concanavalin A-like lectins of the Diocleinae subtribe undergo proteolytic processing referred to as circular permutation. The propeptide is split into an N-terminal and a C-terminal part, the gamma and beta chain, respectively. These are then religated in beta-gamma order to form the mature alpha chain. The beta and gamma chains can often be detected in cell extracts. Residues 1-118 of the mature chain, as displayed here, probably constitute the beta chain in the propeptide, residues 119-237 the gamma chain.

Its function is as follows. D-mannose/D-glucose-binding lectin which binds alpha-methyl-D-mannoside, D-mannose and D-glucose in that order. Also binds to serum fetuin and ovalbumin. Has hemagglutinating activity towards rabbit erythrocytes. Is not toxic towards larvae of the brine shrimp Artemia. Induces relaxation in rat endothelized aorta. Shows a transient edematogenic effect in rat. The chain is Concanavalin V from Canavalia cathartica (Jackbean).